The sequence spans 555 residues: Glypican-6 (555 aa).

Positions 1-23 are cleaved as a signal peptide; the sequence is MPSWIRAVILPLSGLLLTLPAAA. Over residues 348 to 357 the composition is skewed to low complexity; sequence PALRSARSAP. Disordered regions lie at residues 348–376 and 480–501; these read PALR…PTTA and GNDV…GSGC. Serine 530 carries GPI-anchor amidated serine lipidation. Positions 531–555 are cleaved as a propeptide — removed in mature form; that stretch reads ASKFSSSLISWSLVCMVLALQRLYR.

It belongs to the glypican family. As to expression, in the cartilage growth-plate, gradient of expression with highest levels from the proliferative and pre-hypertrophic zones to lowest, if any, in the hypertrophic zones (at protein level).

It localises to the cell membrane. Its subcellular location is the secreted. The protein resides in the extracellular space. In terms of biological role, cell surface proteoglycan that bears heparan sulfate. Putative cell surface coreceptor for growth factors, extracellular matrix proteins, proteases and anti-proteases. Enhances migration and invasion of cancer cells through WNT5A signaling. This chain is Glypican-6 (Gpc6), found in Mus musculus (Mouse).